The sequence spans 2287 residues: Protein Ycf2 (2287 aa).

Residue 1632 to 1639 coordinates ATP; sequence GSIGTGRS.

Belongs to the Ycf2 family.

Its subcellular location is the plastid. It localises to the chloroplast stroma. Probable ATPase of unknown function. Its presence in a non-photosynthetic plant (Epifagus virginiana) and experiments in tobacco indicate that it has an essential function which is probably not related to photosynthesis. The protein is Protein Ycf2 of Calycanthus floridus var. glaucus (Eastern sweetshrub).